An 816-amino-acid chain; its full sequence is Neuronal PAS domain-containing protein 2 (816 aa).

The span at 1–10 (MDEDEKDRAK) shows a compositional bias: basic and acidic residues. Residues 1 to 21 (MDEDEKDRAKRASRNKSEKKR) are disordered. Residues 1–61 (MDEDEKDRAK…VIGFLQKHNE (61 aa)) form a sufficient for heterodimer formation with BMAL1, E-box binding and for the effect of NADPH region. The bHLH domain maps to 9 to 59 (AKRASRNKSEKKRRDQFNVLIKELSSMLPGNTRKMDKTTVLEKVIGFLQKH). In terms of domain architecture, PAS 1 spans 82-152 (NEEFTQLMLE…KILSSHMLVT (71 aa)). Positions 119 and 171 each coordinate heme b. In terms of domain architecture, PAS 2 spans 237 to 307 (FLKEMCVADE…RCHQHLMQFG (71 aa)). Residues 311–354 (SCCYRFLTKGQQWIWLQTHYYITYHQWNSKPEFIVCTHSVVSYA) form the PAC domain. Disordered regions lie at residues 364-431 (LALE…STPT), 610-639 (ISAQ…SQFS), 685-705 (QPMM…RTGR), and 742-816 (PSFP…LSES). The segment covering 400–413 (SGLPSSPSPSASSR) has biased composition (low complexity). A compositionally biased stretch (polar residues) spans 420 to 431 (HTAMSEPTSTPT). Over residues 623-639 (LLPASGRSLSSLPSQFS) the composition is skewed to low complexity. Positions 745-759 (PASRPSPLQPAQAQQ) are enriched in low complexity. Polar residues predominate over residues 780–789 (LLSTFSQQPG). A compositionally biased stretch (basic residues) spans 806–816 (PSRRVSRLSES).

As to quaternary structure, component of the circadian clock oscillator which includes the CRY proteins, CLOCK or NPAS2, BMAL1 or BMAL2, CSNK1D and/or CSNK1E, TIMELESS and the PER proteins. Efficient DNA binding requires dimerization with another bHLH protein. Interacts with NCOA3, KAT2B and CREBBP. Forms a heterodimer with BMAL1 and this heterodimerization is required for E-box-dependent transactivation. Interacts with EP300. It depends on heme as a cofactor. As to expression, expressed in the retinal ganglion cells (at protein level). Expressed in the hypothalamic suprachiasmatic nuclei (SCN) of the brain. Also found in spinal cord, and to a lesser extent in colon, small intestine and uterus. Exhibits a diurnal variation in its expression in the brain.

It localises to the nucleus. With respect to regulation, carbon monoxide (CO) and the redox state of the cell can modulate the transcriptional activity of the NPAS2-BMAL1 heterodimer. NADH and NADPH enhance the DNA-binding activity of the heterodimer whereas CO binds the heme group in NPAS2 and inhibits the DNA-binding activity of the heterodimer. Transcriptional activator which forms a core component of the circadian clock. The circadian clock, an internal time-keeping system, regulates various physiological processes through the generation of approximately 24 hour circadian rhythms in gene expression, which are translated into rhythms in metabolism and behavior. It is derived from the Latin roots 'circa' (about) and 'diem' (day) and acts as an important regulator of a wide array of physiological functions including metabolism, sleep, body temperature, blood pressure, endocrine, immune, cardiovascular, and renal function. Consists of two major components: the central clock, residing in the suprachiasmatic nucleus (SCN) of the brain, and the peripheral clocks that are present in nearly every tissue and organ system. Both the central and peripheral clocks can be reset by environmental cues, also known as Zeitgebers (German for 'timegivers'). The predominant Zeitgeber for the central clock is light, which is sensed by retina and signals directly to the SCN. The central clock entrains the peripheral clocks through neuronal and hormonal signals, body temperature and feeding-related cues, aligning all clocks with the external light/dark cycle. Circadian rhythms allow an organism to achieve temporal homeostasis with its environment at the molecular level by regulating gene expression to create a peak of protein expression once every 24 hours to control when a particular physiological process is most active with respect to the solar day. Transcription and translation of core clock components (CLOCK, NPAS2, BMAL1, BMAL2, PER1, PER2, PER3, CRY1 and CRY2) plays a critical role in rhythm generation, whereas delays imposed by post-translational modifications (PTMs) are important for determining the period (tau) of the rhythms (tau refers to the period of a rhythm and is the length, in time, of one complete cycle). A diurnal rhythm is synchronized with the day/night cycle, while the ultradian and infradian rhythms have a period shorter and longer than 24 hours, respectively. Disruptions in the circadian rhythms contribute to the pathology of cardiovascular diseases, cancer, metabolic syndromes and aging. A transcription/translation feedback loop (TTFL) forms the core of the molecular circadian clock mechanism. Transcription factors, CLOCK or NPAS2 and BMAL1 or BMAL2, form the positive limb of the feedback loop, act in the form of a heterodimer and activate the transcription of core clock genes and clock-controlled genes (involved in key metabolic processes), harboring E-box elements (5'-CACGTG-3') within their promoters. The core clock genes: PER1/2/3 and CRY1/2 which are transcriptional repressors form the negative limb of the feedback loop and interact with the CLOCK|NPAS2-BMAL1|BMAL2 heterodimer inhibiting its activity and thereby negatively regulating their own expression. This heterodimer also activates nuclear receptors NR1D1/2 and RORA/B/G, which form a second feedback loop and which activate and repress BMAL1 transcription, respectively. The NPAS2-BMAL1 heterodimer positively regulates the expression of MAOA, F7 and LDHA and modulates the circadian rhythm of daytime contrast sensitivity by regulating the rhythmic expression of adenylate cyclase type 1 (ADCY1) in the retina. NPAS2 plays an important role in sleep homeostasis and in maintaining circadian behaviors in normal light/dark and feeding conditions and in the effective synchronization of feeding behavior with scheduled food availability. Regulates the gene transcription of key metabolic pathways in the liver and is involved in DNA damage response by regulating several cell cycle and DNA repair genes. Controls the circadian rhythm of NR0B2 expression by binding rhythmically to its promoter. Mediates the diurnal variation in the expression of GABARA1 receptor in the brain and contributes to the regulation of anxiety-like behaviors and GABAergic neurotransmission in the ventral striatum. The polypeptide is Neuronal PAS domain-containing protein 2 (Npas2) (Mus musculus (Mouse)).